Consider the following 617-residue polypeptide: Proline--tRNA ligase (617 aa).

This sequence belongs to the class-II aminoacyl-tRNA synthetase family. ProS type 1 subfamily. In terms of assembly, homodimer.

It localises to the cytoplasm. The enzyme catalyses tRNA(Pro) + L-proline + ATP = L-prolyl-tRNA(Pro) + AMP + diphosphate. Functionally, catalyzes the attachment of proline to tRNA(Pro) in a two-step reaction: proline is first activated by ATP to form Pro-AMP and then transferred to the acceptor end of tRNA(Pro). As ProRS can inadvertently accommodate and process non-cognate amino acids such as alanine and cysteine, to avoid such errors it has two additional distinct editing activities against alanine. One activity is designated as 'pretransfer' editing and involves the tRNA(Pro)-independent hydrolysis of activated Ala-AMP. The other activity is designated 'posttransfer' editing and involves deacylation of mischarged Ala-tRNA(Pro). The misacylated Cys-tRNA(Pro) is not edited by ProRS. The protein is Proline--tRNA ligase of Streptococcus agalactiae serotype III (strain NEM316).